Reading from the N-terminus, the 196-residue chain is ATP-dependent Clp protease proteolytic subunit (196 aa).

Serine 101 (nucleophile) is an active-site residue. The active site involves histidine 126.

It belongs to the peptidase S14 family. Component of the chloroplastic Clp protease core complex.

The protein resides in the plastid. It localises to the chloroplast stroma. The enzyme catalyses Hydrolysis of proteins to small peptides in the presence of ATP and magnesium. alpha-casein is the usual test substrate. In the absence of ATP, only oligopeptides shorter than five residues are hydrolyzed (such as succinyl-Leu-Tyr-|-NHMec, and Leu-Tyr-Leu-|-Tyr-Trp, in which cleavage of the -Tyr-|-Leu- and -Tyr-|-Trp bonds also occurs).. In terms of biological role, cleaves peptides in various proteins in a process that requires ATP hydrolysis. Has a chymotrypsin-like activity. Plays a major role in the degradation of misfolded proteins. This Gossypium hirsutum (Upland cotton) protein is ATP-dependent Clp protease proteolytic subunit.